We begin with the raw amino-acid sequence, 702 residues long: Kinesin-like protein KIF3A (702 aa).

The Kinesin motor domain maps to 14–345 (NVKVVVRCRP…LRYANRAKNI (332 aa)). Residue 100–107 (GQTGTGKT) coordinates ATP. The stretch at 355 to 593 (PKDALLRQFQ…LSRELRLQML (239 aa)) forms a coiled coil. 2 disordered regions span residues 372 to 424 (KKLE…KMIE) and 667 to 702 (LMKL…SLLQ). Positions 376 to 400 (EGEEISGSDISGSEEDDDEEGEIGE) are enriched in acidic residues. Over residues 410 to 424 (DQAGKKKVSPDKMIE) the composition is skewed to basic and acidic residues. The interval 600–702 (PRDYQEMIEN…PETVIDSLLQ (103 aa)) is globular. A compositionally biased stretch (basic residues) spans 675-690 (TSKGKARPKTGRRKRS). The residue at position 690 (Ser690) is a Phosphoserine.

The protein belongs to the TRAFAC class myosin-kinesin ATPase superfamily. Kinesin family. Kinesin II subfamily. Heterodimer of KIF3A and KIF3B. Interacts with CIMAP3. Interacts with CLN3. Interacts with DCTN1. Interacts with FLCN. Interacts with AP3B1.

It localises to the cytoplasm. Its subcellular location is the cytoskeleton. The protein resides in the cell projection. It is found in the cilium. The protein localises to the microtubule organizing center. It localises to the centrosome. Its subcellular location is the centriole. Its function is as follows. Microtubule-based anterograde translocator for membranous organelles. Plus end-directed microtubule sliding activity in vitro. Plays a role in primary cilia formation. Plays a role in centriole cohesion and subdistal appendage organization and function. Regulates the formation of the subdistal appendage via recruitment of DCTN1 to the centriole. Also required for ciliary basal feet formation and microtubule anchoring to mother centriole. This is Kinesin-like protein KIF3A (KIF3A) from Pongo abelii (Sumatran orangutan).